We begin with the raw amino-acid sequence, 203 residues long: Vexin (203 aa).

Residues 59-70 (HRTDRRDGEGRW) show a composition bias toward basic and acidic residues. The disordered stretch occupies residues 59–101 (HRTDRRDGEGRWSGRFQNPRLQGPHPAKTPARPVGTSEPKSAN).

Belongs to the vexin family.

Its subcellular location is the cell membrane. The protein localises to the nucleus. In terms of biological role, required for neurogenesis in the neural plate and retina. Strongly cooperates with neural bHLH factors to promote neurogenesis. This is Vexin from Bos taurus (Bovine).